The following is a 278-amino-acid chain: Shikimate dehydrogenase (NADP(+)) (278 aa).

Residues 19 to 21 (SFS) and Thr-66 each bind shikimate. Lys-70 functions as the Proton acceptor in the catalytic mechanism. The shikimate site is built by Asn-91 and Asp-106. NADP(+)-binding positions include 130-134 (GSGGA) and Leu-222. Position 224 (Tyr-224) interacts with shikimate. NADP(+) is bound at residue Gly-245.

It belongs to the shikimate dehydrogenase family. As to quaternary structure, homodimer.

It catalyses the reaction shikimate + NADP(+) = 3-dehydroshikimate + NADPH + H(+). It participates in metabolic intermediate biosynthesis; chorismate biosynthesis; chorismate from D-erythrose 4-phosphate and phosphoenolpyruvate: step 4/7. In terms of biological role, involved in the biosynthesis of the chorismate, which leads to the biosynthesis of aromatic amino acids. Catalyzes the reversible NADPH linked reduction of 3-dehydroshikimate (DHSA) to yield shikimate (SA). In Methanococcus maripaludis (strain DSM 14266 / JCM 13030 / NBRC 101832 / S2 / LL), this protein is Shikimate dehydrogenase (NADP(+)).